A 740-amino-acid chain; its full sequence is Eukaryotic translation initiation factor 3 subunit B (740 aa).

Residues 1 to 10 show a composition bias toward polar residues; the sequence is MAPSFDTLSE. The disordered stretch occupies residues 1–20; sequence MAPSFDTLSEQDLHEEEEEE. The RRM domain maps to 40 to 126; that stretch reads TFVVIDGLPV…HTLLVNKLMD (87 aa). WD repeat units follow at residues 193-230, 232-289, 302-343, 455-496, 513-556, and 571-609; these read AHWTQLFAQWSPKGTYLASVHPQGVQLWGGPAFSKQKQ, PHPF…RSFV, EPKK…LLGK, SLKD…SFFA, IEKK…EKPE, and IEHYGVTDIDWDPTGRYVVSSASVWTHQLENGWNMHTFA. A disordered region spans residues 695-721; the sequence is DAYGLPEEADDPKLAKDAAATTQEQGE.

Belongs to the eIF-3 subunit B family. In terms of assembly, component of the eukaryotic translation initiation factor 3 (eIF-3) complex.

The protein resides in the cytoplasm. Its function is as follows. RNA-binding component of the eukaryotic translation initiation factor 3 (eIF-3) complex, which is involved in protein synthesis of a specialized repertoire of mRNAs and, together with other initiation factors, stimulates binding of mRNA and methionyl-tRNAi to the 40S ribosome. The eIF-3 complex specifically targets and initiates translation of a subset of mRNAs involved in cell proliferation. The polypeptide is Eukaryotic translation initiation factor 3 subunit B (prt1) (Neosartorya fischeri (strain ATCC 1020 / DSM 3700 / CBS 544.65 / FGSC A1164 / JCM 1740 / NRRL 181 / WB 181) (Aspergillus fischerianus)).